We begin with the raw amino-acid sequence, 1226 residues long: Phosphatidylinositol 3,4,5-trisphosphate 5-phosphatase 2B (1226 aa).

The region spanning 6-102 (WYHRDISRVR…GLVAPLLYPV (97 aa)) is the SH2 domain. The disordered stretch occupies residues 106–144 (SEANDESSDGDDEKPGSTFANSPPRAISPTATSPPSSSA). A compositionally biased stretch (acidic residues) spans 108-117 (ANDESSDGDD). Over residues 127–144 (SPPRAISPTATSPPSSSA) the composition is skewed to low complexity. The NPXY motif signature appears at 906 to 909 (NPAY). Y909 carries the phosphotyrosine modification. 2 disordered regions span residues 945 to 964 (RVTGSHGHGKRSARRSDFTE) and 985 to 1035 (SSAA…LSGK). Residues 1011-1025 (HSSNSSLQLQSHKNN) are compositionally biased toward low complexity. Residues 1163–1226 (GAPETVRELL…ILENLPKIWD (64 aa)) form the SAM domain.

This sequence belongs to the inositol 1,4,5-trisphosphate 5-phosphatase family. In terms of processing, tyrosine phosphorylated by the members of the SRC family after exposure to a diverse array of extracellular stimuli.

It localises to the cytoplasm. It is found in the cytosol. The protein resides in the cytoskeleton. Its subcellular location is the membrane. The protein localises to the cell projection. It localises to the filopodium. It is found in the lamellipodium. The protein resides in the nucleus. Its subcellular location is the nucleus speckle. The enzyme catalyses a 1,2-diacyl-sn-glycero-3-phospho-(1D-myo-inositol-3,4,5-trisphosphate) + H2O = a 1,2-diacyl-sn-glycero-3-phospho-(1D-myo-inositol-3,4-bisphosphate) + phosphate. Phosphatidylinositol (PtdIns) phosphatase that specifically hydrolyzes the 5-phosphate of phosphatidylinositol-3,4,5-trisphosphate (PtdIns(3,4,5)P3) to produce PtdIns(3,4)P2, thereby negatively regulating the PI3K (phosphoinositide 3-kinase) pathways. Plays a central role in regulation of PI3K-dependent insulin signaling, although the precise molecular mechanisms and signaling pathways remain unclear. Part of a signaling pathway that regulates actin cytoskeleton remodeling. Required for the maintenance and dynamic remodeling of actin structures as well as in endocytosis, having a major impact on ligand-induced EGFR internalization and degradation. Participates in regulation of cortical and submembraneous actin. Regulates cell adhesion and cell spreading. Acts as a negative regulator of the FC-gamma-RIIA receptor (FCGR2A). Mediates signaling from the FC-gamma-RIIB receptor (FCGR2B), playing a central role in terminating signal transduction from activating immune/hematopoietic cell receptor systems. May also hydrolyze PtdIns(1,3,4,5)P4, and could thus affect the levels of the higher inositol polyphosphates like InsP6. The sequence is that of Phosphatidylinositol 3,4,5-trisphosphate 5-phosphatase 2B (inppl1b) from Danio rerio (Zebrafish).